We begin with the raw amino-acid sequence, 423 residues long: Isovaleryl-CoA dehydrogenase, mitochondrial (423 aa).

The N-terminal 29 residues, 1–29 (MATATRLLGWRVASWRMRPPPAGFVSQRA), are a transit peptide targeting the mitochondrion. Lys55, Lys64, and Lys75 each carry N6-acetyllysine; alternate. Residues Lys55, Lys64, and Lys75 each carry the N6-succinyllysine; alternate modification. FAD is bound by residues 162 to 171 (LAMSEPNAGS) and 195 to 197 (WIT). Ser171 serves as a coordination point for substrate. 219 to 220 (SR) contacts substrate. Lys238 carries the N6-acetyllysine modification. Lys259 carries the post-translational modification N6-acetyllysine; alternate. Lys259 is modified (N6-succinyllysine; alternate). Residues Tyr274 and 281–284 (DLER) contribute to the substrate site. Glu283 serves as the catalytic Proton acceptor. Arg309 is an FAD binding site. N6-succinyllysine is present on Lys315. FAD is bound by residues Gln320 and 377-381 (QCFGG). 404 to 405 (AG) contacts substrate. 406-408 (TSE) is a binding site for FAD.

It belongs to the acyl-CoA dehydrogenase family. Homotetramer. FAD is required as a cofactor.

It localises to the mitochondrion matrix. It catalyses the reaction 3-methylbutanoyl-CoA + oxidized [electron-transfer flavoprotein] + H(+) = 3-methylbut-2-enoyl-CoA + reduced [electron-transfer flavoprotein]. It carries out the reaction pentanoyl-CoA + oxidized [electron-transfer flavoprotein] + H(+) = (2E)-pentenoyl-CoA + reduced [electron-transfer flavoprotein]. The enzyme catalyses hexanoyl-CoA + oxidized [electron-transfer flavoprotein] + H(+) = (2E)-hexenoyl-CoA + reduced [electron-transfer flavoprotein]. The catalysed reaction is butanoyl-CoA + oxidized [electron-transfer flavoprotein] + H(+) = (2E)-butenoyl-CoA + reduced [electron-transfer flavoprotein]. It functions in the pathway amino-acid degradation; L-leucine degradation; (S)-3-hydroxy-3-methylglutaryl-CoA from 3-isovaleryl-CoA: step 1/3. Catalyzes the conversion of isovaleryl-CoA/3-methylbutanoyl-CoA to 3-methylbut-2-enoyl-CoA as an intermediate step in the leucine (Leu) catabolic pathway. To a lesser extent, is also able to catalyze the oxidation of other saturated short-chain acyl-CoA thioesters as pentanoyl-CoA, hexenoyl-CoA and butenoyl-CoA. This is Isovaleryl-CoA dehydrogenase, mitochondrial (IVD) from Pongo abelii (Sumatran orangutan).